A 152-amino-acid chain; its full sequence is Large-conductance mechanosensitive channel (152 aa).

3 helical membrane-spanning segments follow: residues 21-41, 44-64, and 92-112; these read IDLAVGVIIGAAFGKIVDSLV, VVMPLVNFILGGSVDFSNKFL, and GNFITIIINFVLLAFVIFWMV.

It belongs to the MscL family. Homopentamer.

Its subcellular location is the cell inner membrane. In terms of biological role, channel that opens in response to stretch forces in the membrane lipid bilayer. May participate in the regulation of osmotic pressure changes within the cell. In Bordetella pertussis (strain Tohama I / ATCC BAA-589 / NCTC 13251), this protein is Large-conductance mechanosensitive channel.